A 127-amino-acid chain; its full sequence is Small ribosomal subunit protein uS11 (127 aa).

This sequence belongs to the universal ribosomal protein uS11 family. Part of the 30S ribosomal subunit. Interacts with proteins S7 and S18. Binds to IF-3.

In terms of biological role, located on the platform of the 30S subunit, it bridges several disparate RNA helices of the 16S rRNA. Forms part of the Shine-Dalgarno cleft in the 70S ribosome. This chain is Small ribosomal subunit protein uS11, found in Chlorobium chlorochromatii (strain CaD3).